Reading from the N-terminus, the 238-residue chain is Ribosomal RNA small subunit methyltransferase G (238 aa).

S-adenosyl-L-methionine is bound by residues Gly-77, Phe-82, 128 to 129 (AE), and Arg-146. A disordered region spans residues 216 to 238 (KKRQTPKKYPRKPGTPNKEPLLK).

Belongs to the methyltransferase superfamily. RNA methyltransferase RsmG family.

The protein localises to the cytoplasm. In terms of biological role, specifically methylates the N7 position of guanine in position 535 of 16S rRNA. This chain is Ribosomal RNA small subunit methyltransferase G, found in Macrococcus caseolyticus (strain JCSC5402) (Macrococcoides caseolyticum).